Consider the following 360-residue polypeptide: NAD(P)H-quinone oxidoreductase subunit 1, chloroplastic (360 aa).

8 helical membrane passes run 27–47, 98–118, 129–149, 165–185, 203–223, 253–273, 297–317, and 340–360; these read IWIFVPIFSLVLGIITGVLVI, FSIGPSIAVISILLSYSVIPF, IGIFLWIAISSIAPIGLLMSG, AAQSISYEIPLTLCVLSISLL, FWGWNLWRQPIGFIIFLISSL, FGLFYVASYLNLLISSLFVTV, IFGTTIGIFITLAKTYLFLFV, and FLLPISLGNLLLTTSFQLFSL.

It belongs to the complex I subunit 1 family. NDH is composed of at least 16 different subunits, 5 of which are encoded in the nucleus.

It localises to the plastid. The protein localises to the chloroplast thylakoid membrane. The enzyme catalyses a plastoquinone + NADH + (n+1) H(+)(in) = a plastoquinol + NAD(+) + n H(+)(out). The catalysed reaction is a plastoquinone + NADPH + (n+1) H(+)(in) = a plastoquinol + NADP(+) + n H(+)(out). In terms of biological role, NDH shuttles electrons from NAD(P)H:plastoquinone, via FMN and iron-sulfur (Fe-S) centers, to quinones in the photosynthetic chain and possibly in a chloroplast respiratory chain. The immediate electron acceptor for the enzyme in this species is believed to be plastoquinone. Couples the redox reaction to proton translocation, and thus conserves the redox energy in a proton gradient. This Arabidopsis thaliana (Mouse-ear cress) protein is NAD(P)H-quinone oxidoreductase subunit 1, chloroplastic.